The primary structure comprises 112 residues: UPF0060 membrane protein Daro_2632 (112 aa).

The next 4 membrane-spanning stretches (helical) occupy residues 7 to 27 (VLGLFAITALAEIIGCYLPWL), 34 to 54 (PVWLLIPAAVSLGLFAWLLTL), 59 to 79 (AGRIYAAYGGVYVAIALIWLW), and 89 to 109 (WDLVGSAVSLAGMAIIMLQPA).

This sequence belongs to the UPF0060 family.

It localises to the cell inner membrane. In Dechloromonas aromatica (strain RCB), this protein is UPF0060 membrane protein Daro_2632.